Here is a 1961-residue protein sequence, read N- to C-terminus: Ankyrin-3 (1961 aa).

Residues 1 to 10 (MSEEPKEKPA) show a composition bias toward basic and acidic residues. The tract at residues 1–25 (MSEEPKEKPAKPAHRKRKGKKSDAN) is disordered. Over residues 11 to 20 (KPAHRKRKGK) the composition is skewed to basic residues. At Ser22 the chain carries Phosphoserine. 23 ANK repeats span residues 56–85 (NGLN…NVDA), 89–118 (KGNT…NVNA), 122–151 (NGFT…SQSL), 155–184 (DGFT…KGKV), 186–213 (LPAL…NADV), 217–246 (SGFT…AVDF), 250–279 (NDIT…KIDA), 283–312 (DGLT…PILS), 316–345 (NGLS…PVDD), 349–378 (DYLT…SPNA), 382–411 (NGFT…SIQA), 415–444 (SGLT…SPNT), 448–477 (RGET…QVEA), 481–510 (DDQT…SPNA), 514–543 (SGYT…SLSI), 547–576 (KGFT…SPDA), 580–609 (SGLT…SPHA), 613–642 (NGYT…DANA), 646–675 (QGIA…NVNL), 679–708 (SGLT…HVDA), 712–741 (MGYT…KVNA), 745–774 (NGYT…SPNE), and 778–807 (NGNT…EIMT). Ser606 bears the Phosphoserine mark. At Leu732 the chain carries Phosphoserine. 10 positions are modified to phosphoserine: Ser830, Ser844, Ser850, Ser873, Ser914, Ser917, Ser923, Ser958, Ser960, and Ser1114. ZU5 domains are found at residues 985–1140 (FLVS…VVSR) and 1142–1289 (KQES…LADC). A UPA domain region spans residues 1274-1408 (VSFTTNVSAR…SIKIRDTSQE (135 aa)). Phosphoserine occurs at positions 1451, 1462, 1470, 1473, and 1560. Residues 1478-1562 (TDIRMAIVAD…DIVTLLEGPI (85 aa)) enclose the Death domain. Disordered stretches follow at residues 1606–1678 (PNPF…DPLD), 1698–1740 (SVPG…VTED), 1784–1818 (WQNE…DQAR), 1844–1884 (PEAK…PVSP), and 1915–1961 (MTRT…KKTH). Residues 1725–1740 (QQEKGKSGPDEEVTED) show a composition bias toward basic and acidic residues. The span at 1784–1795 (WQNETPSGSLES) shows a compositional bias: polar residues. Residues Ser1795, Ser1813, and Ser1883 each carry the phosphoserine modification. Positions 1808 to 1818 (DRLDDSSDQAR) are enriched in basic and acidic residues. Basic and acidic residues predominate over residues 1933–1961 (GSTRSEPKQGEGYKVKTKKEIRNVEKKTH).

May be a constituent of a NFASC/NRCAM/ankyrin G complex. Interacts with RHBG. Directly interacts with DMD and betaDAG1; this interaction does not interfere with DMD-binding and is required for DMD and betaDAG1 retention at costameres. Interacts (via N-terminal ANK repeats) with SCHIP1 isoform 7 (via C-terminus); this interaction is required for the localization at axon initial segments (AISs) and nodes of Ranvier (NRs). Interacts with PLEC and FLNC. Interacts with KCNA1; this inhibits channel activity. Interacts with SCN5A. Interacts with PKP2 and GJA1/CX43. As to expression, expressed in many epithelial tissues, muscles and axons. Expressed in kidney, brain, skin, lung, liver, intestine, pancreas, heart and testis (at protein level). In testis, expressed in Leydig cells, but very weakly or not at all in Sertoli cells or seminiferous tubules. Expressed in macrophages (at protein level).

The protein localises to the cytoplasm. Its subcellular location is the cytoskeleton. It is found in the cell projection. It localises to the axon. The protein resides in the cell membrane. The protein localises to the sarcolemma. Its subcellular location is the postsynaptic cell membrane. It is found in the lysosome. It localises to the T-tubule. Functionally, membrane-cytoskeleton linker. May participate in the maintenance/targeting of ion channels and cell adhesion molecules at the nodes of Ranvier and axonal initial segments. In skeletal muscle, required for costamere localization of DMD and betaDAG1. Regulates KCNA1 channel activity in function of dietary Mg(2+) levels, and thereby contributes to the regulation of renal Mg(2+) reabsorption. Required for intracellular adhesion and junctional conductance in myocytes, potentially via stabilization of GJA1/CX43 protein abundance and promotion of PKP2, GJA1/CX43, and SCN5A/Nav1.5 localization to cell-cell junctions. This Mus musculus (Mouse) protein is Ankyrin-3 (Ank3).